A 201-amino-acid polypeptide reads, in one-letter code: Regulator of G-protein signaling 1 (201 aa).

The RGS domain maps to 75 to 191 (SLEKLLISED…LKSEIFLRLA (117 aa)).

It localises to the cell membrane. It is found in the cytoplasm. Its subcellular location is the cytosol. Regulates G protein-coupled receptor signaling cascades, including signaling downstream of the N-formylpeptide chemoattractant receptors and leukotriene receptors. Inhibits B cell chemotaxis. Inhibits signal transduction by increasing the GTPase activity of G protein alpha subunits, thereby driving them into their inactive GDP-bound form. The sequence is that of Regulator of G-protein signaling 1 (rgs1) from Xenopus tropicalis (Western clawed frog).